Reading from the N-terminus, the 207-residue chain is Ribosomal RNA small subunit methyltransferase G (207 aa).

S-adenosyl-L-methionine contacts are provided by residues glycine 73, leucine 78, valine 124–glutamate 125, and arginine 139.

The protein belongs to the methyltransferase superfamily. RNA methyltransferase RsmG family.

The protein localises to the cytoplasm. The catalysed reaction is guanosine(527) in 16S rRNA + S-adenosyl-L-methionine = N(7)-methylguanosine(527) in 16S rRNA + S-adenosyl-L-homocysteine. In terms of biological role, specifically methylates the N7 position of guanine in position 527 of 16S rRNA. In Escherichia coli O17:K52:H18 (strain UMN026 / ExPEC), this protein is Ribosomal RNA small subunit methyltransferase G.